The sequence spans 137 residues: MSFIKEFREFAMRGNVVDLAVGVIIGAAFGKIVSSLVADIIMPPLGLLISGIDFKQFAFTLREAQGDIPAVVMHYGVFIQNVFDFVIVAFAIFVAIKLINRLNRKKAEEPAAPPAPSKEEVLLGEIRDLLKEQNNRS.

A run of 2 helical transmembrane segments spans residues 10–30 (FAMR…AAFG) and 76–96 (GVFI…FVAI).

The protein belongs to the MscL family. As to quaternary structure, homopentamer.

It localises to the cell inner membrane. Channel that opens in response to stretch forces in the membrane lipid bilayer. May participate in the regulation of osmotic pressure changes within the cell. This chain is Large-conductance mechanosensitive channel, found in Salmonella choleraesuis (strain SC-B67).